The following is a 646-amino-acid chain: Galactofuranosyltransferase GlfT2 (646 aa).

UDP-alpha-D-galactofuranose is bound by residues arginine 182, glutamine 211, asparagine 240, and aspartate 267. Mn(2+) is bound by residues aspartate 267 and aspartate 269. Aspartate 384 serves as the catalytic Proton acceptor. Histidine 408 provides a ligand contact to Mn(2+).

It belongs to the glycosyltransferase 2 family. As to quaternary structure, homotetramer. Mn(2+) is required as a cofactor. Requires Mg(2+) as cofactor.

It localises to the cell membrane. The catalysed reaction is beta-D-galactofuranosyl-(1-&gt;5)-beta-D-galactofuranosyl-(1-&gt;4)-alpha-L-rhamnosyl-(1-&gt;3)-N-acetyl-alpha-D-glucosaminyl-diphospho-trans,octa-cis-decaprenol + 28 UDP-alpha-D-galactofuranose = [beta-D-galactofuranosyl-(1-&gt;5)-beta-D-galactofuranosyl-(1-&gt;6)]14-beta-D-galactofuranosyl-(1-&gt;5)-beta-D-galactofuranosyl-(1-&gt;4)-alpha-L-rhamnopyranosyl-(1-&gt;3)-N-acetyl-alpha-D-glucosaminyl-diphospho-trans,octa-cis-decaprenol + 28 UDP + 28 H(+). The protein operates within cell wall biogenesis; cell wall polysaccharide biosynthesis. Involved in the galactan polymerization of the arabinogalactan (AG) region of the mycolylarabinogalactan-peptidoglycan (mAGP) complex, an essential component of the mycobacteria cell wall. Thus, successively transfers approximately 28 galactofuranosyl (Galf) residues from UDP-galactofuranose (UDP-Galf) onto the galactofuranosyl-galactofuranosyl-rhamnosyl-GlcNAc-diphospho-decaprenol (Galf-Galf-Rha-GlcNAc-PP-C50) acceptor produced by GlfT1, with alternating 1-&gt;5 and 1-&gt;6 links, forming a galactan domain with approximately 30 galactofuranosyl residues. In Mycolicibacterium smegmatis (strain ATCC 700084 / mc(2)155) (Mycobacterium smegmatis), this protein is Galactofuranosyltransferase GlfT2.